A 148-amino-acid polypeptide reads, in one-letter code: Cytochrome c-type biogenesis protein CcmE (148 aa).

Residues 1–7 (MTRKQRR) lie on the Cytoplasmic side of the membrane. The helical; Signal-anchor for type II membrane protein transmembrane segment at 8 to 28 (LYFVLLGMAALGGAVALVLTA) threads the bilayer. The Periplasmic segment spans residues 29-148 (ISDSLVYFYS…QWNDGKQPKQ (120 aa)). Heme contacts are provided by histidine 121 and tyrosine 125.

It belongs to the CcmE/CycJ family.

It localises to the cell inner membrane. Functionally, heme chaperone required for the biogenesis of c-type cytochromes. Transiently binds heme delivered by CcmC and transfers the heme to apo-cytochromes in a process facilitated by CcmF and CcmH. The chain is Cytochrome c-type biogenesis protein CcmE from Paramagnetospirillum magneticum (strain ATCC 700264 / AMB-1) (Magnetospirillum magneticum).